The chain runs to 120 residues: Large ribosomal subunit protein uL18 (120 aa).

This sequence belongs to the universal ribosomal protein uL18 family. As to quaternary structure, part of the 50S ribosomal subunit; part of the 5S rRNA/L5/L18/L25 subcomplex. Contacts the 5S and 23S rRNAs.

Its function is as follows. This is one of the proteins that bind and probably mediate the attachment of the 5S RNA into the large ribosomal subunit, where it forms part of the central protuberance. The protein is Large ribosomal subunit protein uL18 of Rhizobium leguminosarum bv. trifolii (strain WSM2304).